The primary structure comprises 171 residues: Lipoprotein signal peptidase (171 aa).

2 helical membrane-spanning segments follow: residues 67-87 (YALL…LWRS) and 88-108 (TSKL…GNAY). Catalysis depends on residues aspartate 118 and aspartate 136. A helical transmembrane segment spans residues 127-147 (FSWYVFNLADAAIVAGVALLL).

Belongs to the peptidase A8 family.

The protein resides in the cell inner membrane. The catalysed reaction is Release of signal peptides from bacterial membrane prolipoproteins. Hydrolyzes -Xaa-Yaa-Zaa-|-(S,diacylglyceryl)Cys-, in which Xaa is hydrophobic (preferably Leu), and Yaa (Ala or Ser) and Zaa (Gly or Ala) have small, neutral side chains.. It participates in protein modification; lipoprotein biosynthesis (signal peptide cleavage). In terms of biological role, this protein specifically catalyzes the removal of signal peptides from prolipoproteins. The sequence is that of Lipoprotein signal peptidase from Methylocella silvestris (strain DSM 15510 / CIP 108128 / LMG 27833 / NCIMB 13906 / BL2).